We begin with the raw amino-acid sequence, 336 residues long: MGNCLHQAELSPSTENSSQLNLEDLWDFPYNGNDSFPEINYDASLEAAAPCYSCNLLDDSSLPFFILASVLGILASSTVLFMLFRPLFRWQLCPGWPVLAQLAVGSALFSIVVPILAPGLGNTRSSALCSLGYCVWYGSAFAQALLLGCHASLGPKLGAGQVPGLTLGLTVGLWGAAALLTVPITLASGASDGLCTPIYSTELKALQATHTVACFAIFVLLPLGLFGAKGVKKALGMGPGPWMTILWIWFIFWWPHGVVLGLDFLVRSKLLLLPTCLAQQVLDLLLNLAEALTIVHCVATPLLLALFCHQATRTLLPSLPLPERWSSPVDTLGSKS.

Topologically, residues 1–63 (MGNCLHQAEL…CNLLDDSSLP (63 aa)) are extracellular. Residues asparagine 16 and asparagine 33 are each glycosylated (N-linked (GlcNAc...) asparagine). Disulfide bonds link cysteine 51/cysteine 276 and cysteine 129/cysteine 195. A helical membrane pass occupies residues 64-84 (FFILASVLGILASSTVLFMLF). At 85–95 (RPLFRWQLCPG) the chain is on the cytoplasmic side. Residues 96–116 (WPVLAQLAVGSALFSIVVPIL) traverse the membrane as a helical segment. Residues 117–129 (APGLGNTRSSALC) lie on the Extracellular side of the membrane. A helical transmembrane segment spans residues 130–153 (SLGYCVWYGSAFAQALLLGCHASL). Residues 154–166 (GPKLGAGQVPGLT) lie on the Cytoplasmic side of the membrane. Residues 167–187 (LGLTVGLWGAAALLTVPITLA) form a helical membrane-spanning segment. At 188–207 (SGASDGLCTPIYSTELKALQ) the chain is on the extracellular side. The chain crosses the membrane as a helical span at residues 208-228 (ATHTVACFAIFVLLPLGLFGA). Residues 229-244 (KGVKKALGMGPGPWMT) are Cytoplasmic-facing. The helical transmembrane segment at 245–265 (ILWIWFIFWWPHGVVLGLDFL) threads the bilayer. The Extracellular portion of the chain corresponds to 266 to 287 (VRSKLLLLPTCLAQQVLDLLLN). Residues 288 to 308 (LAEALTIVHCVATPLLLALFC) traverse the membrane as a helical segment. Residues 309–336 (HQATRTLLPSLPLPERWSSPVDTLGSKS) lie on the Cytoplasmic side of the membrane.

This sequence belongs to the G-protein coupled receptor 1 family. Atypical chemokine receptor subfamily.

Its subcellular location is the early endosome. It localises to the recycling endosome. The protein resides in the membrane. Its function is as follows. Atypical chemokine receptor that controls chemokine levels and localization via high-affinity chemokine binding that is uncoupled from classic ligand-driven signal transduction cascades, resulting instead in chemokine sequestration, degradation, or transcytosis. Also known as interceptor (internalizing receptor) or chemokine-scavenging receptor or chemokine decoy receptor. Has a promiscuous chemokine-binding profile, interacting with inflammatory chemokines of both the CXC and the CC subfamilies but not with homeostatic chemokines. Acts as a receptor for chemokines including CCL2, CCL5, CCL7, CCL11, CCL13, CCL14, CCL17, CXCL5, CXCL6, IL8/CXCL8, CXCL11, GRO, RANTES, MCP-1 and TARC. May regulate chemokine bioavailability and, consequently, leukocyte recruitment through two distinct mechanisms: when expressed in endothelial cells, it sustains the abluminal to luminal transcytosis of tissue-derived chemokines and their subsequent presentation to circulating leukocytes; when expressed in erythrocytes, serves as blood reservoir of cognate chemokines but also as a chemokine sink, buffering potential surges in plasma chemokine levels. The sequence is that of Atypical chemokine receptor 1 (ACKR1) from Sapajus apella (Brown-capped capuchin).